The sequence spans 1131 residues: MLHVSASKGMTEYFKNILDNVKNLYDLAEGCRKSGYDVTDHVEIPLAKDMADRVEGIVGPKNVAERIRELVSDLGKEPAALEIAKEIVEGKFGEFGREVGAEQAVRTALAVITEGIVAAPLEGIAHVKIKKNNDGGEYLAIYFAGPIRSAGGTAQALAVLVGDYVRKNMGLDKFKPTDDEVERYGEEVDLYQSEVTTFQYQPKAEEIRVAVRNISVEITGEATDDVEVSGHRDLPRIETNQIRGGALLALVEGVLLKAPKILRHVDKLGIEGWDWLKELKSKKEELVEEIEEENDEFNYEEEEDLSQYEDYEVEAVTKFIGEVIAGRPVFSHPSKKGGFRLRYGRSRNTGFATDGFHPAIMYLVDDFMAVGTQLKTERPGKATCVVPVDSIEGPIVKLNDKSVLKIDTVEKAKQYRDDVEEILFLGDILVNYGDFLENNHTILPSSWCTEWYEKILKSENLEYTKEFIENPDQKEVVKYAKLTNTPLHPKYTYFWHDISKDNINVLRNWIIGGRYNESNDSWGLTYDPEDPEISIVKRYLELIGCPHTVVDEKVEIFEYYPLLYSLGYDFDEKQDVVEDIEEKLQNTKNNMHFINTIAPFEIRRNAYIYVGARMGRPEKAASRKMKPPVNGLFPIGNAGALVRLINKAVDEGKTDEIEISNVKCSCGNVSLYRTCPFCGSSVEPSGPSRIKLPIKEYWYKALENLKINKAGDVKCIKGMTSKDKIIEPLEKAILRAKNDIFVFKDGTTRFDCTDVPVTHFRPVEIHGDIEKLKSLGYLKDIHGNPLENENQVLELNVQDVIVPESCMDYFLNVSKFIDDLLEKYYKKDRFYNVNKREELVGHLIIGMAPHTSAGMVGRIIGYSKANVGYAHPYFHASKRRNCDGDEDAFFLLLDAFMNFSKRFLPDKRGGQMDAPLVLTTILDPKEVDGEVHNMDSMWEYPLEFYEKSLEGIAPKEIKKIMETVEDRLDKESQYEGIGYTHETLKIDEGPLVCAYKTLGSMMEKTSAQLAVAKKIRATDERDVAEKVIQSHFVPDLIGNLRAFSRQGVRCKCGAKYRRMPLKGICRKCGSRLILTVSKGAVEKYMDVSQTMAEKYNASDYIKQRLEIIRSGIDSLFVNDKRKQVKIEDFFK.

The protein belongs to the archaeal DNA polymerase II family. In terms of assembly, heterodimer of a large subunit and a small subunit.

It carries out the reaction DNA(n) + a 2'-deoxyribonucleoside 5'-triphosphate = DNA(n+1) + diphosphate. The catalysed reaction is Exonucleolytic cleavage in the 3'- to 5'-direction to yield nucleoside 5'-phosphates.. Functionally, possesses two activities: a DNA synthesis (polymerase) and an exonucleolytic activity that degrades single-stranded DNA in the 3'- to 5'-direction. Has a template-primer preference which is characteristic of a replicative DNA polymerase. The sequence is that of DNA polymerase II large subunit from Methanococcus maripaludis (strain C5 / ATCC BAA-1333).